The sequence spans 280 residues: Intimin (280 aa).

A Big-1 domain is found at Ile1–Phe92. One can recognise a BIG2 domain in the interval Ala127–Ala173. The cysteines at positions 201 and 278 are disulfide-linked.

Belongs to the intimin/invasin family.

The protein localises to the cell outer membrane. An inverse autotransporter. The protein is Intimin (eaeA) of Hafnia alvei.